A 776-amino-acid chain; its full sequence is LPS-assembly protein LptD (776 aa).

An N-terminal signal peptide occupies residues 1–24 (MQHFSRTFLAASIATALFAPYAQA).

Belongs to the LptD family. As to quaternary structure, component of the lipopolysaccharide transport and assembly complex. Interacts with LptE and LptA.

It localises to the cell outer membrane. Together with LptE, is involved in the assembly of lipopolysaccharide (LPS) at the surface of the outer membrane. This chain is LPS-assembly protein LptD, found in Vibrio vulnificus (strain CMCP6).